The following is a 106-amino-acid chain: Urease subunit beta (106 aa).

The protein belongs to the urease beta subunit family. Heterotrimer of UreA (gamma), UreB (beta) and UreC (alpha) subunits. Three heterotrimers associate to form the active enzyme.

It is found in the cytoplasm. It catalyses the reaction urea + 2 H2O + H(+) = hydrogencarbonate + 2 NH4(+). It participates in nitrogen metabolism; urea degradation; CO(2) and NH(3) from urea (urease route): step 1/1. In Escherichia coli O157:H7, this protein is Urease subunit beta.